We begin with the raw amino-acid sequence, 209 residues long: MIGLVGRKVGMTRIFTEEGVSIPVTVVEVEANRVSQVKTVETDGYNAIQVTCGSKKANRVSKPEAGHFAKAGVEAGRGLWEFRLENGEEFAVGAELTVEVFNEIKKVDVTGTSKGKGFQGAVKRWNFRTQDMTHGNSLSHRAPGSIGQCQTPGRVFKGKKMAGHMGAERVTTQNLEIVRVDAERNLLLIKGAVPGSTGGNVIVKPAVKA.

Gln-150 is subject to N5-methylglutamine.

This sequence belongs to the universal ribosomal protein uL3 family. As to quaternary structure, part of the 50S ribosomal subunit. Forms a cluster with proteins L14 and L19. Methylated by PrmB.

One of the primary rRNA binding proteins, it binds directly near the 3'-end of the 23S rRNA, where it nucleates assembly of the 50S subunit. The protein is Large ribosomal subunit protein uL3 of Aliivibrio fischeri (strain MJ11) (Vibrio fischeri).